Reading from the N-terminus, the 237-residue chain is Dihydroceramide fatty acyl 2-hydroxylase FAH2 (237 aa).

Helical transmembrane passes span 54–74 (VWWA…SISA) and 77–97 (GLTF…WTLL). Residues His102, His107, His123, His126, and His127 each contribute to the Zn(2+) site. 2 helical membrane passes run 134 to 154 (LRLV…WKLL) and 156 to 176 (LLAT…GYVM). Zn(2+)-binding residues include His181, His185, His201, His204, and His205.

The protein belongs to the sterol desaturase family. Interacts with CYTB5-A, CYTB5-B, CYTB5-C and CYTB5-D. Zn(2+) serves as cofactor. Expressed in leaves, roots, flowers and seeds.

It localises to the endoplasmic reticulum membrane. It carries out the reaction an N-(1,2-saturated acyl)sphinganine + 2 Fe(II)-[cytochrome b5] + O2 + 2 H(+) = an N-[(2'R)-hydroxyacyl]sphinganine + 2 Fe(III)-[cytochrome b5] + H2O. Its function is as follows. Fatty acid 2-hydroxylase involved in the alpha-hydroxylation of the long-chain fatty acid (LCFA) palmitic acid. Probably involved in the resistance response to oxidative stress. This chain is Dihydroceramide fatty acyl 2-hydroxylase FAH2, found in Arabidopsis thaliana (Mouse-ear cress).